Reading from the N-terminus, the 1077-residue chain is Hemoglobin and hemoglobin-haptoglobin-binding protein A (1077 aa).

The first 24 residues, 1 to 24 (MTNFRLNVLAYSVMLGLTASVAYA), serve as a signal peptide directing secretion. The segment at 25–72 (EPTNQPTNQPTNQPTNQPTNQPTNQPTNQPTNQPTNQPTNQPTNQNSN) is disordered. 11 repeat units span residues 26 to 29 (PTNQ), 30 to 33 (PTNQ), 34 to 37 (PTNQ), 38 to 41 (PTNQ), 42 to 45 (PTNQ), 46 to 49 (PTNQ), 50 to 53 (PTNQ), 54 to 57 (PTNQ), 58 to 61 (PTNQ), 62 to 65 (PTNQ), and 66 to 69 (PTNQ). Residues 26 to 69 (PTNQPTNQPTNQPTNQPTNQPTNQPTNQPTNQPTNQPTNQPTNQ) are 11 X 4 AA tandem repeats of P-T-N-Q. Low complexity predominate over residues 26–70 (PTNQPTNQPTNQPTNQPTNQPTNQPTNQPTNQPTNQPTNQPTNQN). A TonB box motif is present at residues 78 to 85 (EQINVSGS). One can recognise a TBDR plug domain in the interval 89–216 (TDTKAPPKIA…LGGSVSLDTK (128 aa)). The 854-residue stretch at 224–1077 (NKNYYASYKR…NYRMSVQFEF (854 aa)) folds into the TBDR beta-barrel domain. Positions 1060-1077 (NRFYAPERNYRMSVQFEF) match the TonB C-terminal box motif.

Belongs to the TonB-dependent receptor family. Hemoglobin/haptoglobin binding protein subfamily.

The protein resides in the cell outer membrane. In terms of biological role, acts as a receptor for hemoglobin or the hemoglobin/haptoglobin complex of the human host and is required for heme uptake. The chain is Hemoglobin and hemoglobin-haptoglobin-binding protein A (hgpA) from Haemophilus influenzae.